A 335-amino-acid polypeptide reads, in one-letter code: Leucine-rich repeat-containing protein 39 (335 aa).

Residues Ala10–Val47 adopt a coiled-coil conformation. 9 LRR repeats span residues Gln84 to Phe105, Asn107 to Leu128, Arg130 to Cys151, Ser153 to Leu176, Lys177 to Asn197, Ala200 to Met221, Asn223 to Met244, Asn246 to Met267, and Asn269 to Glu290.

Interacts with MYH7 (via C-terminus). Highly expressed in skeletal muscle and heart. Not detected in other tissues tested.

It is found in the cytoplasm. It localises to the myofibril. Its subcellular location is the sarcomere. The protein localises to the m line. Functionally, component of the sarcomeric M-band which plays a role in myocyte response to biomechanical stress. May regulate expression of other M-band proteins via an SRF-dependent pathway. Important for normal contractile function in heart. This is Leucine-rich repeat-containing protein 39 (LRRC39) from Homo sapiens (Human).